Reading from the N-terminus, the 120-residue chain is NAD(P)H-quinone oxidoreductase subunit 3, chloroplastic (120 aa).

3 consecutive transmembrane segments (helical) span residues 9-29 (IFWAFLIISSVIPILAFLISG), 64-84 (MFALVFVVFDVETVFLYPWAM), and 88-108 (VLGVSVFIEALIFVLIPIVGS).

This sequence belongs to the complex I subunit 3 family. In terms of assembly, NDH is composed of at least 16 different subunits, 5 of which are encoded in the nucleus.

It is found in the plastid. It localises to the chloroplast thylakoid membrane. It carries out the reaction a plastoquinone + NADH + (n+1) H(+)(in) = a plastoquinol + NAD(+) + n H(+)(out). It catalyses the reaction a plastoquinone + NADPH + (n+1) H(+)(in) = a plastoquinol + NADP(+) + n H(+)(out). Functionally, NDH shuttles electrons from NAD(P)H:plastoquinone, via FMN and iron-sulfur (Fe-S) centers, to quinones in the photosynthetic chain and possibly in a chloroplast respiratory chain. The immediate electron acceptor for the enzyme in this species is believed to be plastoquinone. Couples the redox reaction to proton translocation, and thus conserves the redox energy in a proton gradient. In Calycanthus floridus var. glaucus (Eastern sweetshrub), this protein is NAD(P)H-quinone oxidoreductase subunit 3, chloroplastic.